We begin with the raw amino-acid sequence, 250 residues long: MHILLANDDGYLAPGLAVLHAALAPLGRITVIAPEQNHSGASNSLTLQRPLSIYEAREGVQKGFRFVNGTPTDCVHIALTGLLEEKPDLVVSGINQGQNMGEDVLYSGTVAAAIEGYLLGIPSVAFSQVDKGWEHLDAAARVARTVVERIIGTPPAEPFLLNVNIPNLPFEHIKGYRATRLGKRHPSQPVITQVNPRGDTNYWIGPAGDARDASEGTDFHAAAAGYVSLTPLQLDLTHRGQLDALDQWLK.

A divalent metal cation-binding residues include D8, D9, S39, and N95.

The protein belongs to the SurE nucleotidase family. The cofactor is a divalent metal cation.

It localises to the cytoplasm. The enzyme catalyses a ribonucleoside 5'-phosphate + H2O = a ribonucleoside + phosphate. In terms of biological role, nucleotidase that shows phosphatase activity on nucleoside 5'-monophosphates. This chain is 5'-nucleotidase SurE, found in Cupriavidus necator (strain ATCC 17699 / DSM 428 / KCTC 22496 / NCIMB 10442 / H16 / Stanier 337) (Ralstonia eutropha).